Reading from the N-terminus, the 440-residue chain is Chromosome partition protein MukF (440 aa).

Residues 208–236 (LSETSGTLRELQDTLEAAGDKLQANLLRI) form a leucine-zipper region.

Belongs to the MukF family. As to quaternary structure, interacts, and probably forms a ternary complex, with MukE and MukB via its C-terminal region. The complex formation is stimulated by calcium or magnesium. It is required for an interaction between MukE and MukB.

It is found in the cytoplasm. It localises to the nucleoid. In terms of biological role, involved in chromosome condensation, segregation and cell cycle progression. May participate in facilitating chromosome segregation by condensation DNA from both sides of a centrally located replisome during cell division. Not required for mini-F plasmid partitioning. Probably acts via its interaction with MukB and MukE. Overexpression results in anucleate cells. It has a calcium binding activity. This is Chromosome partition protein MukF from Edwardsiella ictaluri (strain 93-146).